A 335-amino-acid chain; its full sequence is Succinylglutamate desuccinylase (335 aa).

Positions 59, 62, and 151 each coordinate Zn(2+). Glutamate 215 is an active-site residue.

This sequence belongs to the AspA/AstE family. Succinylglutamate desuccinylase subfamily. The cofactor is Zn(2+).

The catalysed reaction is N-succinyl-L-glutamate + H2O = L-glutamate + succinate. It participates in amino-acid degradation; L-arginine degradation via AST pathway; L-glutamate and succinate from L-arginine: step 5/5. Transforms N(2)-succinylglutamate into succinate and glutamate. This chain is Succinylglutamate desuccinylase, found in Pseudomonas putida (strain ATCC 47054 / DSM 6125 / CFBP 8728 / NCIMB 11950 / KT2440).